The following is a 715-amino-acid chain: Fatty acid oxidation complex subunit alpha (715 aa).

The interval 1 to 189 (MIYQGETLSV…KVGAIDAVVA (189 aa)) is enoyl-CoA hydratase/isomerase. Aspartate 296 provides a ligand contact to substrate. The 3-hydroxyacyl-CoA dehydrogenase stretch occupies residues 311–715 (AKATRHAAVL…EMAAQGKTFY (405 aa)). Residues methionine 325, aspartate 344, 401-403 (VVE), lysine 408, and serine 430 each bind NAD(+). Histidine 451 (for 3-hydroxyacyl-CoA dehydrogenase activity) is an active-site residue. Asparagine 454 contributes to the NAD(+) binding site. The substrate site is built by asparagine 501 and tyrosine 661.

It in the N-terminal section; belongs to the enoyl-CoA hydratase/isomerase family. In the C-terminal section; belongs to the 3-hydroxyacyl-CoA dehydrogenase family. As to quaternary structure, heterotetramer of two alpha chains (FadB) and two beta chains (FadA).

The catalysed reaction is a (3S)-3-hydroxyacyl-CoA + NAD(+) = a 3-oxoacyl-CoA + NADH + H(+). The enzyme catalyses a (3S)-3-hydroxyacyl-CoA = a (2E)-enoyl-CoA + H2O. It carries out the reaction a 4-saturated-(3S)-3-hydroxyacyl-CoA = a (3E)-enoyl-CoA + H2O. It catalyses the reaction (3S)-3-hydroxybutanoyl-CoA = (3R)-3-hydroxybutanoyl-CoA. The catalysed reaction is a (3Z)-enoyl-CoA = a 4-saturated (2E)-enoyl-CoA. The enzyme catalyses a (3E)-enoyl-CoA = a 4-saturated (2E)-enoyl-CoA. The protein operates within lipid metabolism; fatty acid beta-oxidation. In terms of biological role, involved in the aerobic and anaerobic degradation of long-chain fatty acids via beta-oxidation cycle. Catalyzes the formation of 3-oxoacyl-CoA from enoyl-CoA via L-3-hydroxyacyl-CoA. It can also use D-3-hydroxyacyl-CoA and cis-3-enoyl-CoA as substrate. This Aeromonas salmonicida (strain A449) protein is Fatty acid oxidation complex subunit alpha.